A 77-amino-acid polypeptide reads, in one-letter code: Translation initiation factor IF-1, chloroplastic (77 aa).

Residues 1-71 (MKEQKWIHEG…TRGRIIYRLR (71 aa)) form the S1-like domain.

This sequence belongs to the IF-1 family. As to quaternary structure, component of the 30S ribosomal translation pre-initiation complex which assembles on the 30S ribosome in the order IF-2 and IF-3, IF-1 and N-formylmethionyl-tRNA(fMet); mRNA recruitment can occur at any time during PIC assembly.

Its subcellular location is the plastid. The protein resides in the chloroplast. Functionally, one of the essential components for the initiation of protein synthesis. Stabilizes the binding of IF-2 and IF-3 on the 30S subunit to which N-formylmethionyl-tRNA(fMet) subsequently binds. Helps modulate mRNA selection, yielding the 30S pre-initiation complex (PIC). Upon addition of the 50S ribosomal subunit IF-1, IF-2 and IF-3 are released leaving the mature 70S translation initiation complex. This is Translation initiation factor IF-1, chloroplastic from Nandina domestica (Heavenly bamboo).